The following is a 774-amino-acid chain: Mastermind-like domain-containing protein 1 (774 aa).

Disordered regions lie at residues 257 to 279, 310 to 365, 386 to 421, 442 to 473, 525 to 609, 656 to 678, and 755 to 774; these read STGI…SSMA, LAAS…PQSL, ALLS…QPQF, HLMS…QQSF, GMAS…QPDH, PQHQ…VSPS, and LPSC…GNDP. Pro residues predominate over residues 331–361; that stretch reads LPPPGLSPPYRPVPSPHPPPLPLPPPPPPFS. The segment covering 386-397 has biased composition (polar residues); it reads ALLSSMTSSSNA. Residues 574–609 are compositionally biased toward low complexity; that stretch reads QQPTPTQASSATASSTATATLQLQQQQQQQQQQPDH. The segment covering 656-669 has biased composition (polar residues); sequence PQHQHGNSFTSRQD. Ser676 bears the Phosphoserine mark.

Belongs to the mastermind family. Expressed in fetal brain, fetal ovary and fetal testis. Expressed in adult brain, ovary, skin, testis, uterus. Highly expressed in skeletal muscle.

The protein localises to the nucleus. Functionally, transactivates the HES3 promoter independently of NOTCH proteins. HES3 is a non-canonical NOTCH target gene which lacks binding sites for RBPJ. The protein is Mastermind-like domain-containing protein 1 (MAMLD1) of Homo sapiens (Human).